Here is a 236-residue protein sequence, read N- to C-terminus: Phosphoribosylaminoimidazole-succinocarboxamide synthase (236 aa).

The protein belongs to the SAICAR synthetase family.

The enzyme catalyses 5-amino-1-(5-phospho-D-ribosyl)imidazole-4-carboxylate + L-aspartate + ATP = (2S)-2-[5-amino-1-(5-phospho-beta-D-ribosyl)imidazole-4-carboxamido]succinate + ADP + phosphate + 2 H(+). The protein operates within purine metabolism; IMP biosynthesis via de novo pathway; 5-amino-1-(5-phospho-D-ribosyl)imidazole-4-carboxamide from 5-amino-1-(5-phospho-D-ribosyl)imidazole-4-carboxylate: step 1/2. The chain is Phosphoribosylaminoimidazole-succinocarboxamide synthase from Pseudomonas putida (strain GB-1).